A 338-amino-acid chain; its full sequence is Uroporphyrinogen decarboxylase (338 aa).

Substrate contacts are provided by residues 25 to 29 (RQAGR), phenylalanine 44, aspartate 75, tyrosine 146, serine 201, and histidine 314.

This sequence belongs to the uroporphyrinogen decarboxylase family. As to quaternary structure, homodimer.

The protein resides in the cytoplasm. It carries out the reaction uroporphyrinogen III + 4 H(+) = coproporphyrinogen III + 4 CO2. Its pathway is porphyrin-containing compound metabolism; protoporphyrin-IX biosynthesis; coproporphyrinogen-III from 5-aminolevulinate: step 4/4. Catalyzes the decarboxylation of four acetate groups of uroporphyrinogen-III to yield coproporphyrinogen-III. This chain is Uroporphyrinogen decarboxylase, found in Aquifex aeolicus (strain VF5).